The sequence spans 436 residues: Glutamyl-tRNA reductase 2 (436 aa).

Residues 49 to 52 (TCNR), serine 106, 111 to 113 (EPQ), and glutamine 117 each bind substrate. Cysteine 50 serves as the catalytic Nucleophile. 186-191 (GAGKMC) is an NADP(+) binding site.

This sequence belongs to the glutamyl-tRNA reductase family. As to quaternary structure, homodimer.

It catalyses the reaction (S)-4-amino-5-oxopentanoate + tRNA(Glu) + NADP(+) = L-glutamyl-tRNA(Glu) + NADPH + H(+). It functions in the pathway porphyrin-containing compound metabolism; protoporphyrin-IX biosynthesis; 5-aminolevulinate from L-glutamyl-tRNA(Glu): step 1/2. Functionally, catalyzes the NADPH-dependent reduction of glutamyl-tRNA(Glu) to glutamate 1-semialdehyde (GSA). In Koribacter versatilis (strain Ellin345), this protein is Glutamyl-tRNA reductase 2.